An 86-amino-acid polypeptide reads, in one-letter code: Small ribosomal subunit protein bS16 (86 aa).

This sequence belongs to the bacterial ribosomal protein bS16 family.

The protein is Small ribosomal subunit protein bS16 of Bordetella petrii (strain ATCC BAA-461 / DSM 12804 / CCUG 43448).